Reading from the N-terminus, the 81-residue chain is MSARKKNRIHVFFVSIMIIISLVSGFGEGIKQINYKDLIKDTIPGCTSKNPKECVKVPANTYHRGCEISTRCHREQHSSSG.

The N-terminal stretch at 1–29 (MSARKKNRIHVFFVSIMIIISLVSGFGEG) is a signal peptide. Disulfide bonds link C46–C54 and C66–C72.

It belongs to the plant rapid alkalinization factor (RALF) family.

Its subcellular location is the secreted. Cell signaling peptide that may regulate plant stress, growth, and development. Mediates a rapid alkalinization of extracellular space by mediating a transient increase in the cytoplasmic Ca(2+) concentration leading to a calcium-dependent signaling events through a cell surface receptor and a concomitant activation of some intracellular mitogen-activated protein kinases. The protein is Protein RALF-like 7 (RALFL7) of Arabidopsis thaliana (Mouse-ear cress).